The chain runs to 373 residues: tRNA N6-adenosine threonylcarbamoyltransferase (373 aa).

Residues His-133, His-137, and Tyr-154 each contribute to the a divalent metal cation site. Substrate is bound by residues 154–158 (YVSGG), Asp-186, Gly-201, Glu-205, and Asn-302. Asp-331 lines the a divalent metal cation pocket.

Belongs to the KAE1 / TsaD family. In terms of assembly, component of the EKC/KEOPS complex composed of at least BUD32, CGI121, GON7, KAE1 and PCC1; the whole complex dimerizes. The cofactor is a divalent metal cation.

The protein localises to the cytoplasm. It localises to the nucleus. It catalyses the reaction L-threonylcarbamoyladenylate + adenosine(37) in tRNA = N(6)-L-threonylcarbamoyladenosine(37) in tRNA + AMP + H(+). In terms of biological role, component of the EKC/KEOPS complex that is required for the formation of a threonylcarbamoyl group on adenosine at position 37 (t(6)A37) in tRNAs that read codons beginning with adenine. The complex is probably involved in the transfer of the threonylcarbamoyl moiety of threonylcarbamoyl-AMP (TC-AMP) to the N6 group of A37. KAE1 likely plays a direct catalytic role in this reaction, but requires other protein(s) of the complex to fulfill this activity. The EKC/KEOPS complex also promotes both telomere uncapping and telomere elongation. The complex is required for efficient recruitment of transcriptional coactivators. The sequence is that of tRNA N6-adenosine threonylcarbamoyltransferase from Debaryomyces hansenii (strain ATCC 36239 / CBS 767 / BCRC 21394 / JCM 1990 / NBRC 0083 / IGC 2968) (Yeast).